The primary structure comprises 453 residues: Lipase 9 (453 aa).

The signal sequence occupies residues 1-14 (MLYLILFLIAPIYA). N-linked (GlcNAc...) asparagine glycosylation occurs at Asn-36. A disulfide bridge connects residues Cys-110 and Cys-281. The Charge relay system role is filled by Ser-194. 3 N-linked (GlcNAc...) asparagine glycosylation sites follow: Asn-229, Asn-266, and Asn-269. Residues Asp-343 and His-376 each act as charge relay system in the active site. Residues Cys-359 and Cys-404 are joined by a disulfide bond. The N-linked (GlcNAc...) asparagine glycan is linked to Asn-417.

This sequence belongs to the AB hydrolase superfamily. Lipase family. Class Lip subfamily.

It is found in the secreted. The enzyme catalyses a triacylglycerol + H2O = a diacylglycerol + a fatty acid + H(+). Secreted lipase that is able to hydrolyze both the neutral triacylglycerols and the monopalmitate ester Tween 40, allowing the use of hydrolyzed products as carbon sources. Has broad lipolytic activity, which may be important for colonization and subsequent infection, therefore contributing to the persistence and virulence in human tissue. In Candida albicans (strain SC5314 / ATCC MYA-2876) (Yeast), this protein is Lipase 9.